The chain runs to 374 residues: Chaperone protein DnaJ (374 aa).

The region spanning 4-68 (DYYEILGVSR…ETRNRYDRFG (65 aa)) is the J domain. Residues 133-215 (GGEKEIRIRH…CGGSGRRQET (83 aa)) form a CR-type zinc finger. Zn(2+) is bound by residues Cys146, Cys149, Cys163, Cys166, Cys189, Cys192, Cys203, and Cys206. 4 CXXCXGXG motif repeats span residues 146–153 (CQTCKGSG), 163–170 (CTTCSGTG), 189–196 (CPTCDGAG), and 203–210 (CDVCGGSG).

The protein belongs to the DnaJ family. In terms of assembly, homodimer. Zn(2+) is required as a cofactor.

It localises to the cytoplasm. Functionally, participates actively in the response to hyperosmotic and heat shock by preventing the aggregation of stress-denatured proteins and by disaggregating proteins, also in an autonomous, DnaK-independent fashion. Unfolded proteins bind initially to DnaJ; upon interaction with the DnaJ-bound protein, DnaK hydrolyzes its bound ATP, resulting in the formation of a stable complex. GrpE releases ADP from DnaK; ATP binding to DnaK triggers the release of the substrate protein, thus completing the reaction cycle. Several rounds of ATP-dependent interactions between DnaJ, DnaK and GrpE are required for fully efficient folding. Also involved, together with DnaK and GrpE, in the DNA replication of plasmids through activation of initiation proteins. This Microcystis aeruginosa (strain NIES-843 / IAM M-2473) protein is Chaperone protein DnaJ.